Consider the following 308-residue polypeptide: Aspartate carbamoyltransferase catalytic subunit (308 aa).

Residues R57 and T58 each coordinate carbamoyl phosphate. Residue K86 participates in L-aspartate binding. Residues R107, H135, and Q138 each coordinate carbamoyl phosphate. L-aspartate-binding residues include R167 and R228. Positions 267 and 268 each coordinate carbamoyl phosphate.

The protein belongs to the aspartate/ornithine carbamoyltransferase superfamily. ATCase family. In terms of assembly, heterooligomer of catalytic and regulatory chains.

It catalyses the reaction carbamoyl phosphate + L-aspartate = N-carbamoyl-L-aspartate + phosphate + H(+). Its pathway is pyrimidine metabolism; UMP biosynthesis via de novo pathway; (S)-dihydroorotate from bicarbonate: step 2/3. Its function is as follows. Catalyzes the condensation of carbamoyl phosphate and aspartate to form carbamoyl aspartate and inorganic phosphate, the committed step in the de novo pyrimidine nucleotide biosynthesis pathway. The polypeptide is Aspartate carbamoyltransferase catalytic subunit (Methanosarcina barkeri (strain Fusaro / DSM 804)).